Reading from the N-terminus, the 496-residue chain is Alpha-amylase (496 aa).

A disulfide bridge links Cys29 with Cys85. 3 residues coordinate Ca(2+): Asn99, Arg155, and Asp164. Residue Arg192 coordinates chloride. Catalysis depends on Asp194, which acts as the Nucleophile. His198 contacts Ca(2+). Glu230 acts as the Proton donor in catalysis. Arg332 lines the chloride pocket. 2 cysteine pairs are disulfide-bonded: Cys374/Cys380 and Cys448/Cys460.

This sequence belongs to the glycosyl hydrolase 13 family. As to quaternary structure, monomer. It depends on Ca(2+) as a cofactor. The cofactor is chloride. Disulfide bonds are present.

The protein resides in the secreted. It catalyses the reaction Endohydrolysis of (1-&gt;4)-alpha-D-glucosidic linkages in polysaccharides containing three or more (1-&gt;4)-alpha-linked D-glucose units.. Inhibited by alpha-amylase inhibitors from wheat and rye. The most effective inhibitors are the wheat tetrameric alpha-amylase inhibitor (WTAI) and the rye dimeric alpha-amylase inhibitor (RDAI-1). Not inhibited by alpha-amylase inhibitor from barley. Functionally, aids in the digestion of starch and glycogen derived from food, such as skin scales, fungi and bacteria. This Dermatophagoides pteronyssinus (European house dust mite) protein is Alpha-amylase.